Consider the following 247-residue polypeptide: Sugar fermentation stimulation protein homolog (247 aa).

The protein belongs to the SfsA family.

The sequence is that of Sugar fermentation stimulation protein homolog from Methylorubrum populi (strain ATCC BAA-705 / NCIMB 13946 / BJ001) (Methylobacterium populi).